We begin with the raw amino-acid sequence, 395 residues long: L-rhamnonate dehydratase (395 aa).

Positions 23 and 49 each coordinate substrate. Mg(2+) contacts are provided by Asp215, Glu241, and Glu269. His319 serves as the catalytic Proton acceptor. Residue Glu339 participates in substrate binding.

It belongs to the mandelate racemase/muconate lactonizing enzyme family. RhamD subfamily. In terms of assembly, homooctamer; tetramer of dimers. Mg(2+) is required as a cofactor.

It carries out the reaction L-rhamnonate = 2-dehydro-3-deoxy-L-rhamnonate + H2O. In terms of biological role, catalyzes the dehydration of L-rhamnonate to 2-keto-3-deoxy-L-rhamnonate (KDR). This chain is L-rhamnonate dehydratase, found in Delftia acidovorans (strain DSM 14801 / SPH-1).